A 96-amino-acid polypeptide reads, in one-letter code: Small ribosomal subunit protein bS6 (96 aa).

This sequence belongs to the bacterial ribosomal protein bS6 family.

In terms of biological role, binds together with bS18 to 16S ribosomal RNA. The sequence is that of Small ribosomal subunit protein bS6 from Streptococcus uberis (strain ATCC BAA-854 / 0140J).